The following is a 134-amino-acid chain: Small ribosomal subunit protein uS9c (134 aa).

Belongs to the universal ribosomal protein uS9 family.

It is found in the plastid. Its subcellular location is the chloroplast. The chain is Small ribosomal subunit protein uS9c (rps9) from Euglena gracilis.